We begin with the raw amino-acid sequence, 230 residues long: MKTNKLVLIRHGQSKWNKLNKFTGWHDIELSDNGINEALKAGSLLKKEKFFFDYAHTSMLKRAIHTLRYILDTLDQSWLPVQKSWRLNERHYGALEGLNKDEMISKYGEEQVNLWRRSFEIIPPQIRLNDKRFPGNDIRYSNIDNNELPLGESLELTAKRVIPYWNKFILPQIKKRNRVLIVAHGNSLRALIQFLNKIDNKKILELNIPTATPIILEFNEEYNSIKWYYL.

Substrate contacts are provided by residues 10–17, 23–24, Arg62, 89–92, Lys100, 116–117, and 185–186; these read RHGQSKWN, TG, ERHY, RR, and GN. His11 (tele-phosphohistidine intermediate) is an active-site residue. Glu89 (proton donor/acceptor) is an active-site residue.

This sequence belongs to the phosphoglycerate mutase family. BPG-dependent PGAM subfamily. In terms of assembly, homodimer.

It carries out the reaction (2R)-2-phosphoglycerate = (2R)-3-phosphoglycerate. Its pathway is carbohydrate degradation; glycolysis; pyruvate from D-glyceraldehyde 3-phosphate: step 3/5. Catalyzes the interconversion of 2-phosphoglycerate and 3-phosphoglycerate. In Buchnera aphidicola subsp. Schizaphis graminum (strain Sg), this protein is 2,3-bisphosphoglycerate-dependent phosphoglycerate mutase.